Consider the following 716-residue polypeptide: Polyribonucleotide nucleotidyltransferase (716 aa).

Residues Asp488 and Asp494 each contribute to the Mg(2+) site. A KH domain is found at 555–614 (PKIETITIPTDKIREVIGTGGKVIREIVATTGAKVDINDEGTVKVSASDGAKIKAAIDWI). Residues 624–692 (GAIYDGKVVK…DRGKTKLSMK (69 aa)) form the S1 motif domain. Positions 695-716 (DQETGEDLSKKEAVSPEEAVNT) are disordered.

This sequence belongs to the polyribonucleotide nucleotidyltransferase family. Requires Mg(2+) as cofactor.

It is found in the cytoplasm. The catalysed reaction is RNA(n+1) + phosphate = RNA(n) + a ribonucleoside 5'-diphosphate. Involved in mRNA degradation. Catalyzes the phosphorolysis of single-stranded polyribonucleotides processively in the 3'- to 5'-direction. The sequence is that of Polyribonucleotide nucleotidyltransferase from Caulobacter sp. (strain K31).